The primary structure comprises 283 residues: Protein FAM170B (283 aa).

Residues 1–11 (MKCYFTDHRGE) show a composition bias toward basic and acidic residues. Disordered regions lie at residues 1–58 (MKCY…REEG) and 246–283 (AQGQAHDQQLEEEQSPSDNSECSRPQGEVLSAQQQEKQ).

Belongs to the FAM170 family. In terms of assembly, interacts with GOPC. As to expression, exclusively expressed in adult testis.

The protein localises to the cytoplasmic vesicle. The protein resides in the secretory vesicle. It is found in the acrosome. It localises to the acrosome outer membrane. Plays a role in fertilization through the acrosome reaction. This Homo sapiens (Human) protein is Protein FAM170B.